Consider the following 169-residue polypeptide: 2-C-methyl-D-erythritol 2,4-cyclodiphosphate synthase (169 aa).

Residues Asp-13 and His-15 each coordinate a divalent metal cation. 4-CDP-2-C-methyl-D-erythritol 2-phosphate contacts are provided by residues 13–15 (DVH) and 39–40 (HS). Position 47 (His-47) interacts with a divalent metal cation. 4-CDP-2-C-methyl-D-erythritol 2-phosphate is bound by residues 61-63 (DIG), 66-70 (FPDTD), Phe-144, and Arg-147.

The protein belongs to the IspF family. Homotrimer. A divalent metal cation is required as a cofactor.

It carries out the reaction 4-CDP-2-C-methyl-D-erythritol 2-phosphate = 2-C-methyl-D-erythritol 2,4-cyclic diphosphate + CMP. It functions in the pathway isoprenoid biosynthesis; isopentenyl diphosphate biosynthesis via DXP pathway; isopentenyl diphosphate from 1-deoxy-D-xylulose 5-phosphate: step 4/6. Functionally, involved in the biosynthesis of isopentenyl diphosphate (IPP) and dimethylallyl diphosphate (DMAPP), two major building blocks of isoprenoid compounds. Catalyzes the conversion of 4-diphosphocytidyl-2-C-methyl-D-erythritol 2-phosphate (CDP-ME2P) to 2-C-methyl-D-erythritol 2,4-cyclodiphosphate (ME-CPP) with a corresponding release of cytidine 5-monophosphate (CMP). The polypeptide is 2-C-methyl-D-erythritol 2,4-cyclodiphosphate synthase (Cupriavidus pinatubonensis (strain JMP 134 / LMG 1197) (Cupriavidus necator (strain JMP 134))).